Reading from the N-terminus, the 256-residue chain is Protein LIKE COV 1 (256 aa).

A compositionally biased stretch (basic and acidic residues) spans 1–10 (MANRERDREL). Residues 1–39 (MANRERDRELLIPVADFGDKDDGSSSKPSSSSSASSSHQ) form a disordered region. Over 1–60 (MANRERDRELLIPVADFGDKDDGSSSKPSSSSSASSSHQSGHETLSLFIRGWASKKFMTG) the chain is Cytoplasmic. Over residues 25–39 (SSKPSSSSSASSSHQ) the composition is skewed to low complexity. Residues 61–81 (CVILLPIAVTFYTTWWFIHFV) form a helical membrane-spanning segment. At 82 to 93 (DGFFSPIYALLG) the chain is on the extracellular side. A helical membrane pass occupies residues 94–114 (INIFGFGFLTSIAFIFLVGVF). Residues 115 to 256 (MSSWLGASVL…KPLASIGNES (142 aa)) are Cytoplasmic-facing.

This sequence belongs to the plant COV1 protein family. As to expression, expressed at low levels in flowers, stems, roots and leaves.

Its subcellular location is the membrane. This Arabidopsis thaliana (Mouse-ear cress) protein is Protein LIKE COV 1.